A 186-amino-acid chain; its full sequence is TATA box-binding protein-like 1 (186 aa).

It belongs to the TBP family.

The protein localises to the cytoplasm. It is found in the nucleus. Its function is as follows. Part of a specialized transcription system that mediates the transcription of most ribosomal proteins through the 5'-TCT-3' motif which is a core promoter element at these genes. Seems to also mediate the transcription of NF1. Does not bind the TATA box. Members of the TBP family are differentially required to regulate transcription and development during early embryogenesis. Particularly regulates genes that have a role in catabolism. The chain is TATA box-binding protein-like 1 (tbpl1) from Xenopus tropicalis (Western clawed frog).